The chain runs to 357 residues: MGSLETEKTVTGYAARDSSGHLSPYTYNLRKKGPEDVIVKVIYCGICHSDLVQMRNEMGMSHYPMVPGHEVVGIVTEIGSEVKKFKVGEHVGVGCIVGSCRSCGNCNQSMEQYCSKRIWTYNDVNHDGTPTQGGFASSMVVDQMFVVRIPENLPLEQAAPLLCAGVTVFSPMKHFAMTEPGKKCGILGLGGVGHMGVKIAKAFGLHVTVISSSDKKKEEAMEVLGADAYLVSKDTEKMMEAAESLDYIMDTIPVAHPLEPYLALLKTNGKLVMLGVVPEPLHFVTPLLILGRRSIAGSFIGSMEETQETLDFCAEKKVSSMIEVVGLDYINTAMERLEKNDVRYRFVVDVAGSKLDN.

Zn(2+) is bound at residue Cys47. Residue Ser49 coordinates NADP(+). His69, Glu70, Cys100, Cys103, Cys106, Cys114, and Cys163 together coordinate Zn(2+). NADP(+)-binding positions include Thr167, 188-193, 211-216, Thr251, Gly275, and 298-300; these read GLGGVG, SSSDKK, and SFI.

This sequence belongs to the zinc-containing alcohol dehydrogenase family. Homodimer. Zn(2+) serves as cofactor.

The enzyme catalyses (E)-cinnamyl alcohol + NADP(+) = (E)-cinnamaldehyde + NADPH + H(+). It catalyses the reaction (E)-coniferol + NADP(+) = (E)-coniferaldehyde + NADPH + H(+). The catalysed reaction is (E)-sinapyl alcohol + NADP(+) = (E)-sinapaldehyde + NADPH + H(+). It carries out the reaction (E)-4-coumaroyl alcohol + NADP(+) = (E)-4-coumaraldehyde + NADPH + H(+). The enzyme catalyses (E)-caffeyl alcohol + NADP(+) = (E)-caffeyl aldehyde + NADPH + H(+). It participates in aromatic compound metabolism; phenylpropanoid biosynthesis. Functionally, involved in lignin biosynthesis. Catalyzes the final step specific for the production of lignin monomers. Catalyzes the NADPH-dependent reduction of coniferaldehyde, 5-hydroxyconiferaldehyde, sinapaldehyde, 4-coumaraldehyde and caffeyl aldehyde to their respective alcohols. This Pinus radiata (Monterey pine) protein is Probable cinnamyl alcohol dehydrogenase (CAD).